The primary structure comprises 293 residues: 1D-myo-inositol 2-acetamido-2-deoxy-alpha-D-glucopyranoside deacetylase (293 aa).

Zn(2+) contacts are provided by His-16, Asp-19, and His-156.

The protein belongs to the MshB deacetylase family. The cofactor is Zn(2+).

It carries out the reaction 1D-myo-inositol 2-acetamido-2-deoxy-alpha-D-glucopyranoside + H2O = 1D-myo-inositol 2-amino-2-deoxy-alpha-D-glucopyranoside + acetate. Catalyzes the deacetylation of 1D-myo-inositol 2-acetamido-2-deoxy-alpha-D-glucopyranoside (GlcNAc-Ins) in the mycothiol biosynthesis pathway. The sequence is that of 1D-myo-inositol 2-acetamido-2-deoxy-alpha-D-glucopyranoside deacetylase from Nakamurella multipartita (strain ATCC 700099 / DSM 44233 / CIP 104796 / JCM 9543 / NBRC 105858 / Y-104) (Microsphaera multipartita).